A 320-amino-acid chain; its full sequence is Calnexin-independence factor 1 (320 aa).

The disordered stretch occupies residues 16–36; that stretch reads SAETSVGEKQPKRKRSEVRAE.

It localises to the nucleus. The protein localises to the nucleolus. Induces a stably inheritable state of calnexin independence called the Cin state when overexpressed. The polypeptide is Calnexin-independence factor 1 (cif1) (Schizosaccharomyces pombe (strain 972 / ATCC 24843) (Fission yeast)).